We begin with the raw amino-acid sequence, 1366 residues long: DNA-directed RNA polymerase subunit beta' (1366 aa).

Positions 1-20 (MTSSKPKKTSRVRKTTKNSK) are enriched in basic residues. The interval 1–33 (MTSSKPKKTSRVRKTTKNSKKNNPVTMPALAKT) is disordered. Residues C248, C315, C322, and C325 each contribute to the Zn(2+) site. A disordered region spans residues 1291–1366 (YTVDMPQSPA…LQEEGLLSDE (76 aa)). Over residues 1354 to 1366 (LEGLQEEGLLSDE) the composition is skewed to low complexity.

Belongs to the RNA polymerase beta' chain family. RpoC2 subfamily. As to quaternary structure, in cyanobacteria the RNAP catalytic core is composed of 2 alpha, 1 beta, 1 beta', 1 gamma and 1 omega subunit. When a sigma factor is associated with the core the holoenzyme is formed, which can initiate transcription. Zn(2+) serves as cofactor.

It carries out the reaction RNA(n) + a ribonucleoside 5'-triphosphate = RNA(n+1) + diphosphate. Functionally, DNA-dependent RNA polymerase catalyzes the transcription of DNA into RNA using the four ribonucleoside triphosphates as substrates. This is DNA-directed RNA polymerase subunit beta' from Prochlorococcus marinus (strain AS9601).